A 156-amino-acid chain; its full sequence is Oxidized purine nucleoside triphosphate hydrolase (156 aa).

One can recognise a Nudix hydrolase domain in the interval 3-132 (TSRLYTLVLV…WFPLLLQKKK (130 aa)). Thr-8 lines the 2-oxo-dATP pocket. Lys-23 contacts 8-oxo-dGTP. 2-oxo-dATP contacts are provided by residues Asn-33 and 35–38 (FGGK). Positions 36, 52, 55, 56, and 100 each coordinate Mg(2+). A Nudix box motif is present at residues 37–58 (GKVQEGETIEDGAKRELREESG). 117 to 120 (WPDD) is a 2-oxo-dATP binding site.

Belongs to the Nudix hydrolase family. As to quaternary structure, monomer. It depends on Mg(2+) as a cofactor.

The protein localises to the cytoplasm. Its subcellular location is the nucleus. It is found in the nucleus membrane. The protein resides in the cytoplasmic vesicle. It localises to the secretory vesicle. The protein localises to the acrosome. The enzyme catalyses 2-oxo-dATP + H2O = 2-oxo-dAMP + diphosphate + H(+). It carries out the reaction 2-oxo-ATP + H2O = 2-oxo-AMP + diphosphate + H(+). The catalysed reaction is 8-oxo-dGTP + H2O = 8-oxo-dGMP + diphosphate + H(+). It catalyses the reaction 8-oxo-dATP + H2O = 8-oxo-dAMP + diphosphate + H(+). The enzyme catalyses O(6)-methyl-dGTP + H2O = O(6)-methyl-dGMP + diphosphate + H(+). It carries out the reaction N(6)-methyl-dATP + H2O = N(6)-methyl-dAMP + diphosphate + H(+). The catalysed reaction is N(6)-methyl-ATP + H2O = N(6)-methyl-AMP + diphosphate + H(+). Functionally, oxidized purine nucleoside triphosphate hydrolase which is a prominent sanitizer of the oxidized nucleotide pool. Catalyzes the hydrolysis of 2-oxo-dATP (2-hydroxy-dATP) into 2-oxo-dAMP. Also has a significant hydrolase activity toward 2-oxo-ATP, 8-oxo-dGTP and 8-oxo-dATP. Through the hydrolysis of oxidized purine nucleoside triphosphates, prevents their incorporation into DNA and the subsequent transversions A:T to C:G and G:C to T:A. Also catalyzes the hydrolysis of methylated purine nucleoside triphosphate preventing their integration into DNA. Through this antimutagenic activity protects cells from oxidative stress. The protein is Oxidized purine nucleoside triphosphate hydrolase (NUDT1) of Canis lupus familiaris (Dog).